Consider the following 104-residue polypeptide: L-rhamnose mutarotase (104 aa).

Tyrosine 18 contributes to the substrate binding site. The active-site Proton donor is histidine 22. Substrate contacts are provided by residues tyrosine 41 and 76 to 77 (WW).

It belongs to the rhamnose mutarotase family. Homodimer.

It is found in the cytoplasm. It carries out the reaction alpha-L-rhamnose = beta-L-rhamnose. It participates in carbohydrate metabolism; L-rhamnose metabolism. Involved in the anomeric conversion of L-rhamnose. The sequence is that of L-rhamnose mutarotase from Mannheimia succiniciproducens (strain KCTC 0769BP / MBEL55E).